A 31-amino-acid chain; its full sequence is Photosystem II reaction center protein T (31 aa).

Residues 3 to 23 traverse the membrane as a helical segment; the sequence is SFAYVLILTLAIATLFFAIAF.

This sequence belongs to the PsbT family. In terms of assembly, PSII is composed of 1 copy each of membrane proteins PsbA, PsbB, PsbC, PsbD, PsbE, PsbF, PsbH, PsbI, PsbJ, PsbK, PsbL, PsbM, PsbT, PsbX, PsbY, PsbZ, Psb30/Ycf12, peripheral proteins PsbO, CyanoQ (PsbQ), PsbU, PsbV and a large number of cofactors. It forms dimeric complexes.

It is found in the cellular thylakoid membrane. Found at the monomer-monomer interface of the photosystem II (PS II) dimer, plays a role in assembly and dimerization of PSII. PSII is a light-driven water plastoquinone oxidoreductase, using light energy to abstract electrons from H(2)O, generating a proton gradient subsequently used for ATP formation. This Parasynechococcus marenigrum (strain WH8102) protein is Photosystem II reaction center protein T.